A 290-amino-acid polypeptide reads, in one-letter code: Signal recognition particle receptor FtsY (290 aa).

Residues 91–98, 173–177, and 237–240 contribute to the GTP site; these read GTNGSGKT, DTSGR, and TKVD.

Belongs to the GTP-binding SRP family. FtsY subfamily. Part of the signal recognition particle protein translocation system, which is composed of SRP and FtsY.

The protein resides in the cell inner membrane. Its subcellular location is the cytoplasm. The catalysed reaction is GTP + H2O = GDP + phosphate + H(+). Its function is as follows. Involved in targeting and insertion of nascent membrane proteins into the cytoplasmic membrane. Acts as a receptor for the complex formed by the signal recognition particle (SRP) and the ribosome-nascent chain (RNC). In Chlamydia pneumoniae (Chlamydophila pneumoniae), this protein is Signal recognition particle receptor FtsY.